A 75-amino-acid polypeptide reads, in one-letter code: Small ribosomal subunit protein bS18c (75 aa).

The protein belongs to the bacterial ribosomal protein bS18 family. Part of the 30S ribosomal subunit.

It is found in the plastid. The protein localises to the chloroplast. The chain is Small ribosomal subunit protein bS18c (rps18) from Marchantia polymorpha (Common liverwort).